A 2227-amino-acid polypeptide reads, in one-letter code: Genome polyprotein (2227 aa).

2 consecutive short sequence motifs ((L)YPX(n)L motif) follow at residues Tyr-167–Leu-171 and Tyr-200–Leu-205. An involved in P1-2A pentamerization region spans residues Met-766–Gln-836. A helical transmembrane segment spans residues Thr-1011–Ile-1031. Residues Ile-1043–Glu-1070 form a membrane-penetrating ability region. A coiled-coil region spans residues Lys-1127–Leu-1155. In terms of domain architecture, SF3 helicase spans His-1204–Met-1366. Gly-1230–Ser-1237 contacts ATP. Residues Trp-1462 to Tyr-1482 form a helical membrane-spanning segment. Tyr-1499 is subject to O-(5'-phospho-RNA)-tyrosine. The Peptidase C3 domain maps to Asp-1514 to Phe-1728. Catalysis depends on for protease 3C activity residues His-1563, Asp-1603, and Cys-1691. The RdRp catalytic domain occupies Asp-1976–Asn-2097.

Belongs to the picornaviridae polyprotein family. As to quaternary structure, homodimer. Homomultimer; probably interacts with membranes in a multimeric form. Seems to assemble into amyloid-like fibers. Homodimer. Monomer. Interacts with protein 3CD. In terms of assembly, interacts with host ACBD3. As to quaternary structure, interacts with protein 3AB. Interacts with human MAVS. In terms of assembly, homodimer; disulfide-linked. As to quaternary structure, homopentamer. Homooligomer. Interacts with capsid protein VP2. Interacts with capsid protein VP3. In terms of assembly, interacts with capsid protein VP1. Interacts with capsid protein VP3. As to quaternary structure, interacts with capsid protein VP1. Interacts with capsid protein VP2. In terms of processing, specific enzymatic cleavages by viral protease in vivo yield a variety of precursors and mature proteins. Polyprotein processing intermediates are produced, such as P1-2A which is a functional precursor of the structural proteins, VP0 which is a VP4-VP2 precursor, VP1-2A precursor, 3ABC precursor which is a stable and catalytically active precursor of 3A, 3B and 3C proteins, 3AB and 3CD precursors. The assembly signal 2A is removed from VP1-2A by a host protease, possibly host Cathepsin L. This cleavage occurs over a region of 3 amino-acids probably generating VP1 proteins with heterogeneous C-termini. Post-translationally, during virion maturation, immature virions are rendered infectious following cleavage of VP0 into VP4 and VP2. This maturation seems to be an autocatalytic event triggered by the presence of RNA in the capsid and is followed by a conformational change of the particle. The assembly signal 2A is removed from VP1-2A by a host protease, possibly host Cathepsin L in naked virions. This cleavage does not occur in enveloped virions. This cleavage occurs over a region of 3 amino-acids probably generating VP1 proteins with heterogeneous C-termini. In terms of processing, VPg is uridylylated prior to priming replication into VPg-pUpU. Post-translationally, unlike other picornaviruses, does not seem to be myristoylated.

It is found in the virion. The protein resides in the host endosome. Its subcellular location is the host multivesicular body. It localises to the host membrane. The protein localises to the host mitochondrion outer membrane. It is found in the host cytoplasm. The protein resides in the host cytoplasmic vesicle membrane. It catalyses the reaction RNA(n) + a ribonucleoside 5'-triphosphate = RNA(n+1) + diphosphate. The catalysed reaction is a ribonucleoside 5'-triphosphate + H2O = a ribonucleoside 5'-diphosphate + phosphate + H(+). It carries out the reaction Selective cleavage of Gln-|-Gly bond in the poliovirus polyprotein. In other picornavirus reactions Glu may be substituted for Gln, and Ser or Thr for Gly.. Its function is as follows. Capsid proteins VP1, VP2, and VP3 form a closed capsid enclosing the viral positive strand RNA genome. All these proteins contain a beta-sheet structure called beta-barrel jelly roll. Together they form an icosahedral capsid (T=3) composed of 60 copies of each VP1, VP2, and VP3, with a diameter of approximately 300 Angstroms. VP1 is situated at the 12 fivefold axes, whereas VP2 and VP3 are located at the quasi-sixfold axes. The naked capsid interacts with the host receptor HAVCR1 to provide virion attachment to and probably entry into the target cell. VP0 precursor is a component of the immature procapsids. Functionally, plays a role in the assembly of the 12 pentamers into an icosahedral structure. Has not been detected in mature virions, supposedly owing to its small size. In terms of biological role, precursor component of immature procapsids that corresponds to an extended form of the structural protein VP1. After maturation, possibly by the host Cathepsin L, the assembly signal 2A is cleaved to give rise to the mature VP1 protein. Its function is as follows. Functions as a viroporin. Affects membrane integrity and causes an increase in membrane permeability. Involved in host intracellular membrane rearrangements probably to give rise to the viral factories. Does not disrupt calcium homeostasis or glycoprotein trafficking. Antagonizes the innate immune response of the host by suppressing IFN-beta synthesis, which it achieves by interfering with the RIG-I/IFIH1 pathway. Affects membrane integrity and causes an increase in membrane permeability. Functionally, associates with and induces structural rearrangements of intracellular membranes. Displays RNA-binding activity. In terms of biological role, the precursor 3ABC is targeted to the mitochondrial membrane where protease 3C activity cleaves and inhibits the host antiviral protein MAVS, thereby disrupting activation of IRF3 through the IFIH1/MDA5 pathway. In vivo, the protease activity of 3ABC precursor is more efficient in cleaving the 2BC precursor than that of protein 3C. The 3ABC precursor may therefore play a role in the proteolytic processing of the polyprotein. Possible viroporin. Its function is as follows. Interacts with the 3CD precursor and with RNA structures found at both the 5'- and 3'-termini of the viral genome. Since the 3AB precursor contains the hydrophobic domain 3A, it probably anchors the whole viral replicase complex to intracellular membranes on which viral RNA synthesis occurs. May serve as membrane anchor to the 3AB and 3ABC precursors via its hydrophobic domain. May interact with RNA. Functionally, acts as a primer for viral RNA replication and remains covalently bound to viral genomic RNA. VPg is uridylylated prior to priming replication into VPg-pUpU. The VPg-pUpU is then used as primer on the genomic RNA poly(A) by the RNA-dependent RNA polymerase to replicate the viral genome. In terms of biological role, cysteine protease that generates mature viral proteins from the precursor polyprotein. In addition to its proteolytic activity, it binds to viral RNA, and thus influences viral genome replication. RNA and substrate bind cooperatively to the protease. Cleaves IKBKG/NEMO to impair innate immune signaling. Cleaves host PABPC1 which may participate in the switch of viral translation to RNA synthesis. Its function is as follows. Interacts with the 3AB precursor and with RNA structures found at both the 5'- and 3'-termini of the viral genome. Disrupts TLR3 signaling by degrading the host adapter protein TICAM1/TRIF. RNA-directed RNA polymerase 3D-POL replicates genomic and antigenomic RNA by recognizing replications specific signals. This is Genome polyprotein from Homo sapiens (Human).